The primary structure comprises 45 residues: Toxin Bcs III 15.09 (45 aa).

An EGF-like domain is found at 2-44; sequence QGTACTGEHAHNFCLNGGTCRHIQSLGEYYCICPEGYTGHRCE. Disulfide bonds link Cys6-Cys21, Cys15-Cys32, and Cys34-Cys43.

Its subcellular location is the secreted. The protein resides in the nematocyst. Functionally, has both toxic and EGF activity. This chain is Toxin Bcs III 15.09, found in Bunodosoma caissarum (Sea anemone).